The primary structure comprises 447 residues: Protein CLT1, chloroplastic (447 aa).

The transit peptide at 1–48 directs the protein to the chloroplast; that stretch reads MATTSSDRLIAGLTASIGSIESRYANPAQSVSLICRNQINGAPPIVLR. Helical transmembrane passes span 103–123, 135–155, 172–192, 200–220, 228–248, 256–276, 304–324, 351–371, 387–407, and 413–433; these read MEIV…RVLY, FFLA…ILYF, LPFL…MAAA, TTVL…IFLG, ILGC…GSGA, GILW…DTVM, IFQV…WGIP, GAPL…ISLL, TVSV…LGVA, and GFVA…WTPS.

The protein belongs to the CRT-like transporter family.

Its subcellular location is the plastid. The protein localises to the chloroplast membrane. Functionally, involved in thiol transport from the plastid to the cytosol. Transports probably both glutathione (GSH) and its precursor, gamma-glutamylcysteine (gamma-EC). Exhibits some functional redundancy with CLT3 in maintaining the root GSH pool. The chain is Protein CLT1, chloroplastic from Arabidopsis thaliana (Mouse-ear cress).